Reading from the N-terminus, the 346-residue chain is Annexin A1 (346 aa).

N-acetylalanine is present on Ala2. Ser5 is modified (phosphoserine; by TRPM7). Gln19 is covalently cross-linked (Isoglutamyl lysine isopeptide (Gln-Lys) (interchain with K-?)). Tyr21 carries the phosphotyrosine; by EGFR modification. Phosphoserine occurs at positions 34 and 37. Thr41 is subject to Phosphothreonine. 4 Annexin repeats span residues 42–113, 114–185, 197–269, and 273–344; these read FNPS…ALLK, TPAQ…SLAK, DLAD…VIVK, and SQPM…ALCG. Lys58 carries the post-translational modification N6-acetyllysine. Positions 59, 60, 62, 97, 100, 105, 127, 129, 131, 132, and 134 each coordinate Ca(2+). Thr136 bears the Phosphothreonine mark. Ca(2+) is bound by residues Asp171, Gly210, and Arg213. Lys214 is covalently cross-linked (Glycyl lysine isopeptide (Lys-Gly) (interchain with G-Cter in SUMO1); alternate). Lys214 is covalently cross-linked (Glycyl lysine isopeptide (Lys-Gly) (interchain with G-Cter in SUMO2); alternate). Residue Gly215 participates in Ca(2+) binding. Lys239 carries the N6-acetyllysine modification. Positions 253, 255, and 256 each coordinate Ca(2+). Lys257 participates in a covalent cross-link: Glycyl lysine isopeptide (Lys-Gly) (interchain with G-Cter in SUMO1). The Ca(2+) site is built by Glu261, Met286, Gly288, and Gly290. An N6-acetyllysine modification is found at Lys312. Cysteines 324 and 343 form a disulfide. 3 residues coordinate Ca(2+): Leu328, Glu330, and Thr331. Residue Lys332 forms a Glycyl lysine isopeptide (Lys-Gly) (interchain with G-Cter in SUMO1) linkage. A Ca(2+)-binding site is contributed by Glu336.

The protein belongs to the annexin family. In terms of assembly, homodimer; non-covalently linked. Homodimer; linked by transglutamylation. Homodimers linked by transglutamylation are observed in placenta, but not in other tissues. Interacts with S100A11. Heterotetramer, formed by two molecules each of S100A11 and ANXA1. Interacts with DYSF. Interacts with EGFR. Post-translationally, phosphorylated by protein kinase C, EGFR and TRPM7. Phosphorylated in response to EGF treatment. In terms of processing, sumoylated. Proteolytically cleaved by cathepsin CTSG to release the active N-terminal peptide Ac2-26. Detected on surface epithelia and mucosal glands in nasal cavity, trachea, bronchi and bronchioles. Detected in blood vessel endothelial cells. Detected in neutrophils (at protein level).

It localises to the nucleus. The protein localises to the cytoplasm. Its subcellular location is the cell projection. The protein resides in the cilium. It is found in the basolateral cell membrane. It localises to the lateral cell membrane. The protein localises to the cell membrane. Its subcellular location is the apical cell membrane. The protein resides in the membrane. It is found in the endosome membrane. It localises to the secreted. The protein localises to the extracellular space. Its subcellular location is the early endosome. The protein resides in the cytoplasmic vesicle membrane. It is found in the extracellular exosome. It localises to the cytoplasmic vesicle. The protein localises to the secretory vesicle lumen. Its subcellular location is the phagocytic cup. Functionally, plays important roles in the innate immune response as effector of glucocorticoid-mediated responses and regulator of the inflammatory process. Has anti-inflammatory activity. Plays a role in glucocorticoid-mediated down-regulation of the early phase of the inflammatory response. Contributes to the adaptive immune response by enhancing signaling cascades that are triggered by T-cell activation, regulates differentiation and proliferation of activated T-cells. Promotes the differentiation of T-cells into Th1 cells and negatively regulates differentiation into Th2 cells. Has no effect on unstimulated T-cells. Negatively regulates hormone exocytosis via activation of the formyl peptide receptors and reorganization of the actin cytoskeleton. Has high affinity for Ca(2+) and can bind up to eight Ca(2+) ions. Displays Ca(2+)-dependent binding to phospholipid membranes. Plays a role in the formation of phagocytic cups and phagosomes. Plays a role in phagocytosis by mediating the Ca(2+)-dependent interaction between phagosomes and the actin cytoskeleton. Its function is as follows. Functions at least in part by activating the formyl peptide receptors and downstream signaling cascades. Promotes chemotaxis of granulocytes and monocytes via activation of the formyl peptide receptors. Promotes rearrangement of the actin cytoskeleton, cell polarization and cell migration. Promotes resolution of inflammation and wound healing. Acts via neutrophil N-formyl peptide receptors to enhance the release of CXCL2. This is Annexin A1 (ANXA1) from Bos taurus (Bovine).